Reading from the N-terminus, the 525-residue chain is GMP synthase [glutamine-hydrolyzing] (525 aa).

The 199-residue stretch at 9–207 (RILILDFGSQ…VLEICGCAAL (199 aa)) folds into the Glutamine amidotransferase type-1 domain. The Nucleophile role is filled by Cys-86. Active-site residues include His-181 and Glu-183. The GMPS ATP-PPase domain occupies 208–400 (WTPATIIEDA…LGLPYDMLYR (193 aa)). Residue 235–241 (SGGVDSS) participates in ATP binding.

As to quaternary structure, homodimer.

It catalyses the reaction XMP + L-glutamine + ATP + H2O = GMP + L-glutamate + AMP + diphosphate + 2 H(+). The protein operates within purine metabolism; GMP biosynthesis; GMP from XMP (L-Gln route): step 1/1. Catalyzes the synthesis of GMP from XMP. This Edwardsiella ictaluri (strain 93-146) protein is GMP synthase [glutamine-hydrolyzing].